A 455-amino-acid chain; its full sequence is 3-phosphoshikimate 1-carboxyvinyltransferase (455 aa).

The disordered stretch occupies residues 1-23 (MSHGSNPRPATARKSSDLKGTLR). Positions 28, 29, and 33 each coordinate 3-phosphoshikimate. Lysine 28 lines the phosphoenolpyruvate pocket. Phosphoenolpyruvate-binding residues include glycine 100 and arginine 128. 3-phosphoshikimate contacts are provided by serine 173, glutamine 175, aspartate 326, and lysine 353. Glutamine 175 is a binding site for phosphoenolpyruvate. Aspartate 326 (proton acceptor) is an active-site residue. Positions 357 and 405 each coordinate phosphoenolpyruvate.

This sequence belongs to the EPSP synthase family. In terms of assembly, monomer.

It localises to the cytoplasm. The catalysed reaction is 3-phosphoshikimate + phosphoenolpyruvate = 5-O-(1-carboxyvinyl)-3-phosphoshikimate + phosphate. The protein operates within metabolic intermediate biosynthesis; chorismate biosynthesis; chorismate from D-erythrose 4-phosphate and phosphoenolpyruvate: step 6/7. Its function is as follows. Catalyzes the transfer of the enolpyruvyl moiety of phosphoenolpyruvate (PEP) to the 5-hydroxyl of shikimate-3-phosphate (S3P) to produce enolpyruvyl shikimate-3-phosphate and inorganic phosphate. The sequence is that of 3-phosphoshikimate 1-carboxyvinyltransferase from Rhizobium meliloti (strain 1021) (Ensifer meliloti).